A 332-amino-acid chain; its full sequence is Beta-ketoacyl-[acyl-carrier-protein] synthase III 2 (332 aa).

Active-site residues include C115 and H252. An ACP-binding region spans residues S253–R257. N282 is a catalytic residue.

This sequence belongs to the thiolase-like superfamily. FabH family. Homodimer.

The protein resides in the cytoplasm. The enzyme catalyses malonyl-[ACP] + acetyl-CoA + H(+) = 3-oxobutanoyl-[ACP] + CO2 + CoA. The protein operates within lipid metabolism; fatty acid biosynthesis. Catalyzes the condensation reaction of fatty acid synthesis by the addition to an acyl acceptor of two carbons from malonyl-ACP. Catalyzes the first condensation reaction which initiates fatty acid synthesis and may therefore play a role in governing the total rate of fatty acid production. Possesses both acetoacetyl-ACP synthase and acetyl transacylase activities. Its substrate specificity determines the biosynthesis of branched-chain and/or straight-chain of fatty acids. This is Beta-ketoacyl-[acyl-carrier-protein] synthase III 2 from Halalkalibacterium halodurans (strain ATCC BAA-125 / DSM 18197 / FERM 7344 / JCM 9153 / C-125) (Bacillus halodurans).